We begin with the raw amino-acid sequence, 239 residues long: Pyridoxine 5'-phosphate synthase (239 aa).

Asn9 contacts 3-amino-2-oxopropyl phosphate. A 1-deoxy-D-xylulose 5-phosphate-binding site is contributed by 11–12; the sequence is DH. Position 20 (Arg20) interacts with 3-amino-2-oxopropyl phosphate. Catalysis depends on His45, which acts as the Proton acceptor. 1-deoxy-D-xylulose 5-phosphate contacts are provided by Arg47 and His52. Glu72 (proton acceptor) is an active-site residue. Thr102 is a 1-deoxy-D-xylulose 5-phosphate binding site. His189 functions as the Proton donor in the catalytic mechanism. 3-amino-2-oxopropyl phosphate contacts are provided by residues Gly190 and 211 to 212; that span reads GH.

This sequence belongs to the PNP synthase family. In terms of assembly, homooctamer; tetramer of dimers.

It is found in the cytoplasm. The enzyme catalyses 3-amino-2-oxopropyl phosphate + 1-deoxy-D-xylulose 5-phosphate = pyridoxine 5'-phosphate + phosphate + 2 H2O + H(+). It functions in the pathway cofactor biosynthesis; pyridoxine 5'-phosphate biosynthesis; pyridoxine 5'-phosphate from D-erythrose 4-phosphate: step 5/5. Catalyzes the complicated ring closure reaction between the two acyclic compounds 1-deoxy-D-xylulose-5-phosphate (DXP) and 3-amino-2-oxopropyl phosphate (1-amino-acetone-3-phosphate or AAP) to form pyridoxine 5'-phosphate (PNP) and inorganic phosphate. The chain is Pyridoxine 5'-phosphate synthase from Ehrlichia chaffeensis (strain ATCC CRL-10679 / Arkansas).